The chain runs to 305 residues: MRPLAIIGPTGTGKSALALDVAERLGGEIGVEIVNADAMQLYRGMDIGTAKLPAAQRRGVPHHQLDVLDVTETASVARYQSEAARDIEAIAARGAVPIIVGGSMMYVQALLDDWAFPATDPAVRARWEQRLAEVGVAALHGELGKVDPDAAASILPTDGRRIVRALEVVELTGQPFAASAPTIGAPRWDTAIIGLDWETTVLDERLAARTDSMFAEGLVAEVAGLLRHGLREGVTASRALGYAQVLADLDAGGDGSAAREPTFVGTRRYVRRQRSWFRRDHRVCWLDGGSPDNVDRTLRAWRAVS.

8–15 (GPTGTGKS) contacts ATP. A substrate-binding site is contributed by 10–15 (TGTGKS).

The protein belongs to the IPP transferase family. In terms of assembly, monomer. The cofactor is Mg(2+).

It catalyses the reaction adenosine(37) in tRNA + dimethylallyl diphosphate = N(6)-dimethylallyladenosine(37) in tRNA + diphosphate. Functionally, catalyzes the transfer of a dimethylallyl group onto the adenine at position 37 in tRNAs that read codons beginning with uridine, leading to the formation of N6-(dimethylallyl)adenosine (i(6)A). This Mycobacterium sp. (strain KMS) protein is tRNA dimethylallyltransferase.